A 74-amino-acid chain; its full sequence is UPF0435 protein BAA_0470 (74 aa).

This sequence belongs to the UPF0435 family.

The protein is UPF0435 protein BAA_0470 of Bacillus anthracis (strain A0248).